Reading from the N-terminus, the 750-residue chain is Ribosomal RNA large subunit methyltransferase K/L (750 aa).

The THUMP domain occupies 46-157 (TAYRLCLWSR…RGEAILSLDL (112 aa)).

It belongs to the methyltransferase superfamily. RlmKL family.

It is found in the cytoplasm. It carries out the reaction guanosine(2445) in 23S rRNA + S-adenosyl-L-methionine = N(2)-methylguanosine(2445) in 23S rRNA + S-adenosyl-L-homocysteine + H(+). It catalyses the reaction guanosine(2069) in 23S rRNA + S-adenosyl-L-methionine = N(2)-methylguanosine(2069) in 23S rRNA + S-adenosyl-L-homocysteine + H(+). Functionally, specifically methylates the guanine in position 2445 (m2G2445) and the guanine in position 2069 (m7G2069) of 23S rRNA. This is Ribosomal RNA large subunit methyltransferase K/L from Pseudomonas syringae pv. syringae (strain B728a).